Reading from the N-terminus, the 321-residue chain is Glucokinase (321 aa).

8 to 13 (GDVGGT) provides a ligand contact to ATP.

This sequence belongs to the bacterial glucokinase family.

It is found in the cytoplasm. The catalysed reaction is D-glucose + ATP = D-glucose 6-phosphate + ADP + H(+). The polypeptide is Glucokinase (Escherichia coli O127:H6 (strain E2348/69 / EPEC)).